The chain runs to 208 residues: Small ribosomal subunit protein uS4A (208 aa).

The S4 RNA-binding domain occupies 98–159; that stretch reads SRLDNVAYNM…HAKSYLRIKA (62 aa).

It belongs to the universal ribosomal protein uS4 family. As to quaternary structure, part of the 30S ribosomal subunit. Contacts protein S5. The interaction surface between S4 and S5 is involved in control of translational fidelity.

In terms of biological role, one of the primary rRNA binding proteins, it binds directly to 16S rRNA where it nucleates assembly of the body of the 30S subunit. With S5 and S12 plays an important role in translational accuracy. This chain is Small ribosomal subunit protein uS4A (rpsD1), found in Nitrosomonas europaea (strain ATCC 19718 / CIP 103999 / KCTC 2705 / NBRC 14298).